The sequence spans 93 residues: Co-chaperonin GroES (93 aa).

Belongs to the GroES chaperonin family. As to quaternary structure, heptamer of 7 subunits arranged in a ring. Interacts with the chaperonin GroEL.

It is found in the cytoplasm. Its function is as follows. Together with the chaperonin GroEL, plays an essential role in assisting protein folding. The GroEL-GroES system forms a nano-cage that allows encapsulation of the non-native substrate proteins and provides a physical environment optimized to promote and accelerate protein folding. GroES binds to the apical surface of the GroEL ring, thereby capping the opening of the GroEL channel. The polypeptide is Co-chaperonin GroES (Lacticaseibacillus paracasei (strain ATCC 334 / BCRC 17002 / CCUG 31169 / CIP 107868 / KCTC 3260 / NRRL B-441) (Lactobacillus paracasei)).